The sequence spans 1909 residues: DENN domain-containing protein 4C (1909 aa).

The MABP domain maps to 40 to 199; that stretch reads KAPITDIAII…SVFLCYKKSV (160 aa). The region spanning 191-364 is the uDENN domain; the sequence is VFLCYKKSVP…NIPFPSPQRP (174 aa). One can recognise a cDENN domain in the interval 385 to 521; it reads PLPLSGANFS…PCKNLLSTLK (137 aa). Positions 523-641 constitute a dDENN domain; the sequence is LYPQLSSVHQ…CSFVSDKDTG (119 aa). Phosphoserine occurs at positions 703, 737, and 741. Residues 821-855 form a PPR repeat; it reads VCYRVVMQLCGLWGHPVLAVRVLFEMKTARIKPNA. Phosphoserine occurs at positions 953, 965, 968, and 973. Threonine 975 carries the post-translational modification Phosphothreonine. Serine 989, serine 996, serine 1003, serine 1046, serine 1061, serine 1099, serine 1126, serine 1184, serine 1225, serine 1244, serine 1252, and serine 1278 each carry phosphoserine. Disordered regions lie at residues 1243–1263 and 1277–1338; these read KSPLGSKSSSMELHREENRES and SSLP…HGSL. Residues 1296–1316 show a composition bias toward polar residues; sequence SSPAVSRSKTFTGRFKQQTPS. Residues serine 1325, serine 1337, and serine 1346 each carry the phosphoserine modification. Residues 1419–1474 are disordered; the sequence is SGLVPSELTQSNTSLGSSSSSGDVGKLHYPTGEVPFPRGMKGQDFEKSDHGSSQNT. A compositionally biased stretch (low complexity) spans 1426–1440; the sequence is LTQSNTSLGSSSSSG. Basic and acidic residues predominate over residues 1459–1468; sequence KGQDFEKSDH. Phosphoserine is present on residues serine 1623, serine 1627, serine 1629, serine 1640, and serine 1799.

Post-translationally, phosphorylated in response to insulin.

The protein localises to the cytoplasmic vesicle membrane. The protein resides in the cell membrane. It localises to the cytoplasm. Its subcellular location is the cytosol. Functionally, guanine nucleotide exchange factor (GEF) activating RAB10. Promotes the exchange of GDP to GTP, converting inactive GDP-bound RAB10 into its active GTP-bound form. Thereby, stimulates SLC2A4/GLUT4 glucose transporter-enriched vesicles delivery to the plasma membrane in response to insulin. This Homo sapiens (Human) protein is DENN domain-containing protein 4C (DENND4C).